Consider the following 406-residue polypeptide: Tryptophan synthase beta chain (406 aa).

The residue at position 99 (lysine 99) is an N6-(pyridoxal phosphate)lysine.

Belongs to the TrpB family. As to quaternary structure, tetramer of two alpha and two beta chains. The cofactor is pyridoxal 5'-phosphate.

It catalyses the reaction (1S,2R)-1-C-(indol-3-yl)glycerol 3-phosphate + L-serine = D-glyceraldehyde 3-phosphate + L-tryptophan + H2O. It participates in amino-acid biosynthesis; L-tryptophan biosynthesis; L-tryptophan from chorismate: step 5/5. Functionally, the beta subunit is responsible for the synthesis of L-tryptophan from indole and L-serine. This chain is Tryptophan synthase beta chain, found in Rhizobium leguminosarum bv. trifolii (strain WSM2304).